A 410-amino-acid polypeptide reads, in one-letter code: Acetate kinase (410 aa).

Asn7 provides a ligand contact to Mg(2+). Lys14 contacts ATP. Arg88 lines the substrate pocket. Residue Asp145 is the Proton donor/acceptor of the active site. Residues 203–207 (HAGNG), 278–280 (DTR), and 326–330 (GIGEN) each bind ATP. Residue Glu379 participates in Mg(2+) binding.

Belongs to the acetokinase family. As to quaternary structure, homodimer. Mg(2+) is required as a cofactor. Mn(2+) serves as cofactor.

The protein resides in the cytoplasm. The catalysed reaction is acetate + ATP = acetyl phosphate + ADP. Its pathway is metabolic intermediate biosynthesis; acetyl-CoA biosynthesis; acetyl-CoA from acetate: step 1/2. Functionally, catalyzes the formation of acetyl phosphate from acetate and ATP. Can also catalyze the reverse reaction. This Onion yellows phytoplasma (strain OY-M) protein is Acetate kinase.